Here is a 402-residue protein sequence, read N- to C-terminus: 5-methylphenazine-1-carboxylate 1-monooxygenase (402 aa).

FAD is bound by residues 14–15 (IG), 35–36 (ES), 43–45 (LGV), R106, V132, R191, and D310. Positions 368-385 (REKEEWAAASRPKTEKSA) are enriched in basic and acidic residues. Residues 368 to 402 (REKEEWAAASRPKTEKSAALEAITGSYRNQVERPR) are disordered.

In terms of assembly, monomer in solution. Probably interacts transiently with PhzM. FAD is required as a cofactor.

The enzyme catalyses 5-methyl-phenazine-1-carboxylate + NADH + O2 + 2 H(+) = pyocyanin + CO2 + NAD(+) + H2O. It functions in the pathway secondary metabolite biosynthesis; pyocyanine biosynthesis. Functionally, involved in the biosynthesis of pyocyanine, a blue-pigmented phenazine derivative, which plays a role in virulence. Catalyzes the oxidative decarboxylation of 5-methylphenazine-1-carboxylate (5-methyl-PCA) to pyocyanine. Can also act on phenazine-1-carboxylate (PCA), converting it into 1-hydroxyphenazine (1-HP). However, PCA is a poor substrate. The protein is 5-methylphenazine-1-carboxylate 1-monooxygenase of Pseudomonas aeruginosa (strain ATCC 15692 / DSM 22644 / CIP 104116 / JCM 14847 / LMG 12228 / 1C / PRS 101 / PAO1).